Reading from the N-terminus, the 96-residue chain is Translation initiation factor 1A 1 (96 aa).

The 75-residue stretch at Gly8–Glu82 folds into the S1-like domain.

This sequence belongs to the eIF-1A family.

Its function is as follows. Seems to be required for maximal rate of protein biosynthesis. Enhances ribosome dissociation into subunits and stabilizes the binding of the initiator Met-tRNA(I) to 40 S ribosomal subunits. The polypeptide is Translation initiation factor 1A 1 (Haloquadratum walsbyi (strain DSM 16790 / HBSQ001)).